Here is a 714-residue protein sequence, read N- to C-terminus: Probable metal-nicotianamine transporter YSL5 (714 aa).

The tract at residues 17 to 44 (HELQETGFSPETEKVKNKNFEEDEEEED) is disordered. Basic and acidic residues predominate over residues 27–36 (ETEKVKNKNF). 13 helical membrane passes run 67-87 (AFVVSFMLSILFSFIVMKLNL), 90-110 (GIIPSLNVSAGLLGFFFVKTW), 135-155 (CVVASSGIAFSGGFGTYLFGM), 175-195 (LGWIIGFLFVVSFLGLFSVVP), 236-256 (VLGKFFSLSFFWSFFQWFFTG), 295-315 (IINISVLLGGILSWGIMWPLI), 340-360 (VFIAVAIILGDGLYNFCKVLS), 413-433 (IPTWFAVGGYITIAATSTAIL), 445-465 (ILVIYICAPVLAFCNAYGAGL), 477-497 (LAIFTIGAWAGSEHGGMLAGL), 531-551 (FVSQVIGTAMGCVVSPCVFWL), 593-613 (LVLCYAFFGVAILVNIVKDSL), and 631-651 (FFLGPYFAIDMCVGSLILFIW).

This sequence belongs to the YSL (TC 2.A.67.2) family.

It is found in the membrane. Its function is as follows. May be involved in the transport of nicotianamine-chelated metals. The polypeptide is Probable metal-nicotianamine transporter YSL5 (YSL5) (Arabidopsis thaliana (Mouse-ear cress)).